Reading from the N-terminus, the 493-residue chain is Glutamate--tRNA ligase (493 aa).

A 'HIGH' region motif is present at residues 10 to 20; it reads PSPTGDPHVGT. Positions 251–255 match the 'KMSKS' region motif; the sequence is KLSKR. Residue Lys-254 participates in ATP binding.

It belongs to the class-I aminoacyl-tRNA synthetase family. Glutamate--tRNA ligase type 1 subfamily. As to quaternary structure, monomer.

The protein localises to the cytoplasm. It carries out the reaction tRNA(Glu) + L-glutamate + ATP = L-glutamyl-tRNA(Glu) + AMP + diphosphate. Functionally, catalyzes the attachment of glutamate to tRNA(Glu) in a two-step reaction: glutamate is first activated by ATP to form Glu-AMP and then transferred to the acceptor end of tRNA(Glu). The chain is Glutamate--tRNA ligase from Pseudomonas entomophila (strain L48).